The following is a 746-amino-acid chain: Histone-lysine N-methyltransferase EZH2 (746 aa).

Residues 1-340 (MGQTGKKSEK…AKEFAAALTA (340 aa)) form an interaction with DNMT1, DNMT3A and DNMT3B region. Serine 21 is modified (phosphoserine; by PKB/AKT1). The interaction with EED stretch occupies residues 39–68 (KTMFSSNRQKILERTETLNQEWKQRRIQPV). The O-linked (GlcNAc) serine glycan is linked to serine 75. Serine 76 bears the Phosphoserine mark. The interval 180-217 (QYNDDDDDDDGDDPDEREEKQKDLEDNRDDKETCPPRK) is disordered. Residues 182–195 (NDDDDDDDGDDPDE) show a composition bias toward acidic residues. Residues 196 to 217 (REEKQKDLEDNRDDKETCPPRK) are compositionally biased toward basic and acidic residues. The interaction with CDYL stretch occupies residues 329–522 (EGAKEFAAAL…SSNHVYNYQP (194 aa)). The residue at position 339 (threonine 339) is a Phosphothreonine. Residues 340 to 426 (AERIKTPPKR…PIKMKPNIEP (87 aa)) are disordered. Position 345 is a phosphothreonine; by CDK1 and CDK2 (threonine 345). Positions 345-357 (TPPKRPGGRRRGR) are enriched in basic residues. Serine 363 and serine 366 each carry phosphoserine. Threonine 367 is modified (phosphothreonine). Residues 374–385 (ESKDTDSDREAG) are compositionally biased toward basic and acidic residues. Threonine 487 is subject to Phosphothreonine. Positions 503-605 (CRKIQLKKDG…SKNVSCKNCS (103 aa)) constitute a CXC domain. Positions 612–727 (KHLLLAPSDV…TGEELFFDYR (116 aa)) constitute an SET domain. Lysine 634 is covalently cross-linked (Glycyl lysine isopeptide (Lys-Gly) (interchain with G-Cter in SUMO2)).

This sequence belongs to the class V-like SAM-binding methyltransferase superfamily. Histone-lysine methyltransferase family. EZ subfamily. Component of the PRC2/EED-EZH2 complex, which includes EED, EZH2, SUZ12, RBBP4 and RBBP7 and possibly AEBP2. The minimum components required for methyltransferase activity of the PRC2/EED-EZH2 complex are EED, EZH2 and SUZ12. The PRC2 complex may also interact with DNMT1, DNMT3A, DNMT3B and PHF1 via the EZH2 subunit and with SIRT1 via the SUZ12 subunit. Interacts with HDAC1 and HDAC2. Binds ATRX via the SET domain. Interacts with PRAME. Interacts with CDYL. Interacts with EED. Interacts with BMAL1. Interacts with CLOCK and CRY1. Interacts with DNMT3L; the interaction is direct. Interacts with EZHIP; the interaction blocks EZH2 methyltransferase activity. Interacts with ZNF263; recruited to the SIX3 promoter along with other proteins involved in chromatin modification and transcriptional corepression where it contributes to transcriptional repression. Interacts with ARMC12. Interacts with ZMYND8; the interaction is dependent on the presence of chromatin. Interacts with DDX18; this interaction inhibits the PRC2 complex. In terms of processing, phosphorylated by AKT1. Phosphorylation by AKT1 reduces methyltransferase activity. Phosphorylation at Thr-345 by CDK1 and CDK2 promotes maintenance of H3K27me3 levels at EZH2-target loci, thus leading to epigenetic gene silencing. Sumoylated. Post-translationally, glycosylated: O-GlcNAcylation at Ser-75 by OGT increases stability of EZH2 and facilitates the formation of H3K27me3 by the PRC2/EED-EZH2 complex. As to expression, present in actively dividing cells. Widely expressed in early embryos. In later embryogenesis, expression restricted to central and peripheral nervous system, liver and thymus. In adult, highest expression in spleen, testis and placenta. Lower levels in intestine, muscle and ovary and very low levels in brain and liver. No expression in heart, thyroid gland, lung and kidney.

It is found in the nucleus. Its subcellular location is the chromosome. The enzyme catalyses L-lysyl(27)-[histone H3] + 3 S-adenosyl-L-methionine = N(6),N(6),N(6)-trimethyl-L-lysyl(27)-[histone H3] + 3 S-adenosyl-L-homocysteine + 3 H(+). Polycomb group (PcG) protein. Catalytic subunit of the PRC2/EED-EZH2 complex, which methylates (H3K9me) and 'Lys-27' (H3K27me) of histone H3, leading to transcriptional repression of the affected target gene. Able to mono-, di- and trimethylate 'Lys-27' of histone H3 to form H3K27me1, H3K27me2 and H3K27me3, respectively. Displays a preference for substrates with less methylation, loses activity when progressively more methyl groups are incorporated into H3K27, H3K27me0 &gt; H3K27me1 &gt; H3K27me2. Compared to EZH1-containing complexes, it is more abundant in embryonic stem cells and plays a major role in forming H3K27me3, which is required for embryonic stem cell identity and proper differentiation. The PRC2/EED-EZH2 complex may also serve as a recruiting platform for DNA methyltransferases, thereby linking two epigenetic repression systems. Genes repressed by the PRC2/EED-EZH2 complex include HOXA7, HOXB6 and HOXC8. EZH2 can also methylate non-histone proteins such as the transcription factor GATA4 and the nuclear receptor RORA. Regulates the circadian clock via histone methylation at the promoter of the circadian genes. Essential for the CRY1/2-mediated repression of the transcriptional activation of PER1/2 by the CLOCK-BMAL1 heterodimer; involved in the di and trimethylation of 'Lys-27' of histone H3 on PER1/2 promoters which is necessary for the CRY1/2 proteins to inhibit transcription. This Mus musculus (Mouse) protein is Histone-lysine N-methyltransferase EZH2.